Here is a 632-residue protein sequence, read N- to C-terminus: DNA mismatch repair protein MutL (632 aa).

The protein belongs to the DNA mismatch repair MutL/HexB family.

Functionally, this protein is involved in the repair of mismatches in DNA. It is required for dam-dependent methyl-directed DNA mismatch repair. May act as a 'molecular matchmaker', a protein that promotes the formation of a stable complex between two or more DNA-binding proteins in an ATP-dependent manner without itself being part of a final effector complex. In Pseudomonas putida (strain GB-1), this protein is DNA mismatch repair protein MutL.